A 666-amino-acid polypeptide reads, in one-letter code: Non-receptor tyrosine-protein kinase TNK1 (666 aa).

2 positions are modified to phosphoserine: serine 60 and serine 96. In terms of domain architecture, Protein kinase spans 116–377 (VCRGELLGSG…PSFSHLEGLL (262 aa)). ATP-binding positions include 122–130 (LGSGCFGVV) and lysine 148. The active-site Proton acceptor is aspartate 245. Serine 255 and serine 411 each carry phosphoserine. An SH3 domain is found at 380-445 (AGPSEACCVR…PASAVTLADA (66 aa)). A disordered region spans residues 446 to 493 (GGLPATRPVHRGTPARGDQHPGSIDGDRKKANLWDAPPARGQRRNMPL). Position 502 is a phosphoserine (serine 502). A disordered region spans residues 506-579 (VLSLGPRPTG…MGMPGARKAA (74 aa)). Position 514 is a phosphothreonine (threonine 514). At serine 519 the chain carries Phosphoserine. The segment covering 531-541 (QGPPGLPPRPP) has biased composition (pro residues). Residues 542-552 (LSSSSPQPSQP) show a composition bias toward low complexity. Phosphoserine is present on serine 582.

It belongs to the protein kinase superfamily. Tyr protein kinase family. Interacts with the SH3 domain of PLCG1 via its Pro-rich domain. In terms of processing, autophosphorylated on tyrosine residues. As to expression, expressed in all umbilical cord blood, bone marrow and adult blood cell sub-populations and in several leukemia cell lines. Highly expressed in fetal blood, brain, lung, liver and kidney. Detected at lower levels in adult prostate, testis, ovary, small intestine and colon. Not expressed in adult lung, liver, kidney or brain.

It localises to the cytoplasm. The protein localises to the membrane. It carries out the reaction L-tyrosyl-[protein] + ATP = O-phospho-L-tyrosyl-[protein] + ADP + H(+). Functionally, involved in negative regulation of cell growth. Has tumor suppressor properties. Plays a negative regulatory role in the Ras-MAPK pathway. May function in signaling pathways utilized broadly during fetal development and more selectively in adult tissues and in cells of the lymphohematopoietic system. Could specifically be involved in phospholipid signal transduction. The protein is Non-receptor tyrosine-protein kinase TNK1 of Homo sapiens (Human).